Reading from the N-terminus, the 287-residue chain is Protease HtpX (287 aa).

The next 2 membrane-spanning stretches (helical) occupy residues 4–24 (IFLL…VMSI) and 33–53 (GGLL…SLAI). H139 contributes to the Zn(2+) binding site. The active site involves E140. H143 lines the Zn(2+) pocket. The next 2 helical transmembrane spans lie at 154–174 (LIQG…AGII) and 195–215 (AVVF…VAYF). E220 provides a ligand contact to Zn(2+).

The protein belongs to the peptidase M48B family. Zn(2+) serves as cofactor.

The protein localises to the cell inner membrane. This is Protease HtpX from Shewanella sp. (strain MR-4).